The chain runs to 369 residues: Glutamate 5-kinase (369 aa).

Lysine 8 serves as a coordination point for ATP. The substrate site is built by serine 49, aspartate 136, and asparagine 148. Residues threonine 168–aspartate 169 and threonine 212–lysine 218 each bind ATP. The region spanning threonine 277–valine 355 is the PUA domain.

This sequence belongs to the glutamate 5-kinase family.

It is found in the cytoplasm. The enzyme catalyses L-glutamate + ATP = L-glutamyl 5-phosphate + ADP. Its pathway is amino-acid biosynthesis; L-proline biosynthesis; L-glutamate 5-semialdehyde from L-glutamate: step 1/2. Its function is as follows. Catalyzes the transfer of a phosphate group to glutamate to form L-glutamate 5-phosphate. In Trichormus variabilis (strain ATCC 29413 / PCC 7937) (Anabaena variabilis), this protein is Glutamate 5-kinase.